Consider the following 176-residue polypeptide: uncharacterized protein (176 aa).

The N-terminal stretch at 1–20 is a signal peptide; that stretch reads MIKKISIILITLFIIQLTKS. The tract at residues 26–46 is disordered; sequence NNNNNNNNNNNNNNNNNNNNN. Asn120 carries N-linked (GlcNAc...) asparagine glycosylation.

It belongs to the Dictyostelium gerABC family.

It localises to the secreted. This is an uncharacterized protein from Dictyostelium discoideum (Social amoeba).